The sequence spans 325 residues: Eukaryotic translation initiation factor 3 subunit I (325 aa).

WD repeat units lie at residues 8 to 47 (GHER…RLGT), 50 to 89 (GHTG…QLAL), 144 to 183 (CSDS…QLSN), 186 to 225 (EHTK…HLKT), and 283 to 324 (GHFG…FEFE).

This sequence belongs to the eIF-3 subunit I family. In terms of assembly, component of the eukaryotic translation initiation factor 3 (eIF-3) complex, which is composed of 13 subunits: EIF3A, EIF3B, EIF3C, EIF3D, EIF3E, EIF3F, EIF3G, EIF3H, EIF3I, EIF3J, EIF3K, EIF3L and EIF3M.

The protein resides in the cytoplasm. In terms of biological role, component of the eukaryotic translation initiation factor 3 (eIF-3) complex, which is involved in protein synthesis of a specialized repertoire of mRNAs and, together with other initiation factors, stimulates binding of mRNA and methionyl-tRNAi to the 40S ribosome. The eIF-3 complex specifically targets and initiates translation of a subset of mRNAs involved in cell proliferation. In Taeniopygia guttata (Zebra finch), this protein is Eukaryotic translation initiation factor 3 subunit I.